We begin with the raw amino-acid sequence, 393 residues long: Putative mitogen-activated protein kinase kinase kinase 7-like (393 aa).

A Protein kinase domain is found at 11-266; sequence KLSEKFLGAG…PSMKEIEKFL (256 aa). ATP contacts are provided by residues 17-25 and lysine 38; that span reads LGAGSGGAV. The active-site Proton acceptor is aspartate 133. The segment at 339–379 is disordered; the sequence is AAADGDREVRRAEKDTERETSRAAHNGERETRRAGQDVGRE.

This sequence belongs to the protein kinase superfamily. STE Ser/Thr protein kinase family. MAP kinase kinase kinase subfamily. It depends on Mg(2+) as a cofactor.

The enzyme catalyses L-seryl-[protein] + ATP = O-phospho-L-seryl-[protein] + ADP + H(+). It carries out the reaction L-threonyl-[protein] + ATP = O-phospho-L-threonyl-[protein] + ADP + H(+). The protein is Putative mitogen-activated protein kinase kinase kinase 7-like (Takl1) of Drosophila melanogaster (Fruit fly).